The following is a 577-amino-acid chain: MNIQSLINDKVSQALEAAGAPAGSPAAVRQSAKAQFGDYQANGVMGVAKRLGTNPREFAQKVLDVLDLDGIASKTEIAGPGFINIFLSEEFLAKQAEAALADERLGVALETKQNIVADYSAPNVAKEMHVGHLRSTIIGDAVVRTLEFLGHNVTRANHIGDWGTQFGMLIANLERIQKEKGEVSMELSDLEGFYRESKKLYDEDEEFAVTARGYVVKLQGGDAFCADMWKKLVDVTMVQNQRNYDRLNVSLTRDNVMGESMYNSMLAPIVADLQEKGLAVESDGAQVVYLDEYKNKDGDPMGVIVQKRDGGFLYTTTDIACAKYRFEELNADRVLYFIDSRQHQHLMQAWTIVRKAGYVPESVSLEHHAFGMMLGKDGRPFKTRAGGTVRLADLLDEAEQRAIALIEEKNKDLSTEEKAKIATTVAMAAVKYSDLSKHRTTDYIFDWDNILAFEGNTAPYMQYAYTRVASIFSKADLSMDNLAGEVKITDEKEKALITKLMQFEEAVQAVASEGQPHLMCAYLFELAGQFSSFYEACPILNNDDESIKQSRLKLAALTAKTIKQGLDLLGIETLERM.

Positions proline 122 to histidine 132 match the 'HIGH' region motif.

This sequence belongs to the class-I aminoacyl-tRNA synthetase family. As to quaternary structure, monomer.

The protein localises to the cytoplasm. It carries out the reaction tRNA(Arg) + L-arginine + ATP = L-arginyl-tRNA(Arg) + AMP + diphosphate. In Aliivibrio salmonicida (strain LFI1238) (Vibrio salmonicida (strain LFI1238)), this protein is Arginine--tRNA ligase.